The sequence spans 479 residues: Sulfate adenylyltransferase subunit 1 (479 aa).

One can recognise a tr-type G domain in the interval 22–238; the sequence is KDMLRFLTCG…DSMDISKEPK (217 aa). The G1 stretch occupies residues 31 to 38; it reads GSVDDGKS. 31 to 38 is a GTP binding site; it reads GSVDDGKS. The segment at 89–93 is G2; that stretch reads GITID. The segment at 110–113 is G3; sequence DTPG. GTP-binding positions include 110–114 and 165–168; these read DTPGH and NKMD. A G4 region spans residues 165-168; the sequence is NKMD. The tract at residues 202-204 is G5; it reads SAL.

The protein belongs to the TRAFAC class translation factor GTPase superfamily. Classic translation factor GTPase family. CysN/NodQ subfamily. Heterodimer composed of CysD, the smaller subunit, and CysN.

The catalysed reaction is sulfate + ATP + H(+) = adenosine 5'-phosphosulfate + diphosphate. Its pathway is sulfur metabolism; hydrogen sulfide biosynthesis; sulfite from sulfate: step 1/3. With CysD forms the ATP sulfurylase (ATPS) that catalyzes the adenylation of sulfate producing adenosine 5'-phosphosulfate (APS) and diphosphate, the first enzymatic step in sulfur assimilation pathway. APS synthesis involves the formation of a high-energy phosphoric-sulfuric acid anhydride bond driven by GTP hydrolysis by CysN coupled to ATP hydrolysis by CysD. The polypeptide is Sulfate adenylyltransferase subunit 1 (Sulfurovum sp. (strain NBC37-1)).